A 211-amino-acid polypeptide reads, in one-letter code: Large ribosomal subunit protein uL4 (211 aa).

Residues 52-79 (GRAEVHGSNSKPYSQKGTGRARRGDKKS) are disordered. The segment covering 58–68 (GSNSKPYSQKG) has biased composition (polar residues).

This sequence belongs to the universal ribosomal protein uL4 family. Part of the 50S ribosomal subunit.

In terms of biological role, one of the primary rRNA binding proteins, this protein initially binds near the 5'-end of the 23S rRNA. It is important during the early stages of 50S assembly. It makes multiple contacts with different domains of the 23S rRNA in the assembled 50S subunit and ribosome. Its function is as follows. Forms part of the polypeptide exit tunnel. The polypeptide is Large ribosomal subunit protein uL4 (Treponema denticola (strain ATCC 35405 / DSM 14222 / CIP 103919 / JCM 8153 / KCTC 15104)).